The chain runs to 375 residues: Alcohol dehydrogenase 1 (375 aa).

At Ser2 the chain carries N-acetylserine. The Zn(2+) site is built by Cys47, His68, Cys98, Cys101, Cys104, Cys112, and Cys175. Residues Gly200–Gly205, Asp224, and Lys229 each bind NAD(+). N6-succinyllysine is present on Lys234. Residue Val293–Val295 participates in NAD(+) binding. Lys340 bears the N6-succinyllysine mark. An NAD(+)-binding site is contributed by Arg370.

Belongs to the zinc-containing alcohol dehydrogenase family. Class-I subfamily. Zn(2+) serves as cofactor.

The protein localises to the cytoplasm. It carries out the reaction a primary alcohol + NAD(+) = an aldehyde + NADH + H(+). The catalysed reaction is a secondary alcohol + NAD(+) = a ketone + NADH + H(+). The polypeptide is Alcohol dehydrogenase 1 (ADH1) (Peromyscus maniculatus (North American deer mouse)).